The following is a 244-amino-acid chain: Cytochrome c1 (244 aa).

The signal sequence occupies residues methionine 1 to alanine 19. Positions 50, 53, and 54 each coordinate heme c. A helical membrane pass occupies residues tyrosine 220–tryptophan 240.

The main subunits of complex b-c1 are: cytochrome b, cytochrome c1 and the Rieske protein. Binds 1 heme c group covalently per subunit.

The protein localises to the cell membrane. In terms of biological role, component of the ubiquinol-cytochrome c reductase complex (complex III or cytochrome b-c1 complex), which is a respiratory chain that generates an electrochemical potential coupled to ATP synthesis. c1 functions as an electron donor to cytochrome c. The polypeptide is Cytochrome c1 (petC) (Allochromatium vinosum (strain ATCC 17899 / DSM 180 / NBRC 103801 / NCIMB 10441 / D) (Chromatium vinosum)).